The sequence spans 157 residues: 17.8 kDa class I heat shock protein (157 aa).

The region spanning 41–156 (ETSAITNARV…KAQVKSIDIS (116 aa)) is the sHSP domain.

The protein belongs to the small heat shock protein (HSP20) family. Homodimer under normal physiological conditions. Aggregates in high oligomeric complexes after heat shock. Binds to AKR2A and to chloroplasts. Expressed ubiquitously at low levels under normal physiological conditions.

It localises to the cytoplasm. In terms of biological role, cytosolic mediator for sorting and targeting of nascent chloroplast outer envelope membrane (OEM) proteins to the chloroplast. Functions as an AKR2A cofactor to facilitate the targeting of OEP7 to chloroplasts. The polypeptide is 17.8 kDa class I heat shock protein (HSP17.8) (Arabidopsis thaliana (Mouse-ear cress)).